The primary structure comprises 580 residues: Alpha-thujene synthase, chloroplastic (580 aa).

A chloroplast-targeting transit peptide spans 1 to 32 (MALQLLTPSFSFQHSPSPHKLTTLRYTHHRIR). (2E)-geranyl diphosphate-binding residues include Arg-296, Asp-333, Asp-337, Arg-473, and Asp-476. The Mg(2+) site is built by Asp-333 and Asp-337. The DDXXD motif motif lies at 333–337 (DDVYD). Mg(2+) contacts are provided by Asp-476, Thr-480, and Glu-484.

It belongs to the terpene synthase family. Tpsb subfamily. In terms of assembly, monomer. Mg(2+) serves as cofactor. The cofactor is Mn(2+). As to expression, expressed in developing and mature fruits. Barely detectable in leaves and shoots.

It is found in the plastid. Its subcellular location is the chloroplast. The enzyme catalyses (2E)-geranyl diphosphate = alpha-thujene + diphosphate. It functions in the pathway secondary metabolite biosynthesis; terpenoid biosynthesis. In terms of biological role, monoterpene synthase (TPS) involved in the biosynthesis of monoterpene natural products used by traditional Chinese medicine to treat headache, inflammation and intoxication. Catalyzes the conversion of (2E)-geranyl diphosphate (GPP) into alpha-thujene. This is Alpha-thujene synthase, chloroplastic from Litsea cubeba (Aromatic litsea).